The following is a 195-amino-acid chain: Ribonuclease HII (195 aa).

The RNase H type-2 domain occupies 6–195 (SLIAGVDEVG…KSFISRLKKN (190 aa)). A divalent metal cation-binding residues include Asp-12, Glu-13, and Asp-108.

The protein belongs to the RNase HII family. The cofactor is Mn(2+). Requires Mg(2+) as cofactor.

The protein localises to the cytoplasm. The enzyme catalyses Endonucleolytic cleavage to 5'-phosphomonoester.. Endonuclease that specifically degrades the RNA of RNA-DNA hybrids. This is Ribonuclease HII from Prochlorococcus marinus (strain NATL2A).